The sequence spans 128 residues: Large ribosomal subunit protein uL22 (128 aa).

This sequence belongs to the universal ribosomal protein uL22 family. In terms of assembly, part of the 50S ribosomal subunit.

Functionally, this protein binds specifically to 23S rRNA; its binding is stimulated by other ribosomal proteins, e.g. L4, L17, and L20. It is important during the early stages of 50S assembly. It makes multiple contacts with different domains of the 23S rRNA in the assembled 50S subunit and ribosome. The globular domain of the protein is located near the polypeptide exit tunnel on the outside of the subunit, while an extended beta-hairpin is found that lines the wall of the exit tunnel in the center of the 70S ribosome. This Methylobacterium radiotolerans (strain ATCC 27329 / DSM 1819 / JCM 2831 / NBRC 15690 / NCIMB 10815 / 0-1) protein is Large ribosomal subunit protein uL22.